The primary structure comprises 135 residues: Retinol-binding protein 1 (135 aa).

An important for interaction with STRA6 region spans residues 22 to 32 (RALDVNVALRK). Positions 41, 63, and 109 each coordinate all-trans-retinol.

The protein belongs to the calycin superfamily. Fatty-acid binding protein (FABP) family. Interacts (only as retinol-free apoprotein) with STRA6.

Its subcellular location is the cytoplasm. It is found in the lipid droplet. Its function is as follows. Cytoplasmic retinol-binding protein. Accepts retinol from the transport protein STRA6, and thereby contributes to retinol uptake, storage and retinoid homeostasis. This is Retinol-binding protein 1 (RBP1) from Bos taurus (Bovine).